Consider the following 95-residue polypeptide: Acyl carrier protein AcpXL (95 aa).

A Carrier domain is found at 4 to 90 (TATFDKVADI…NLCAKIDELR (87 aa)). Ser39 carries the O-(pantetheine 4'-phosphoryl)serine modification.

Post-translationally, 4'-phosphopantetheine is transferred from CoA to a specific serine of apo-ACP by AcpS. This modification is essential for activity because fatty acids are bound in thioester linkage to the sulfhydryl of the prosthetic group.

The protein resides in the cytoplasm. It participates in glycolipid biosynthesis; KDO(2)-lipid A biosynthesis. Carrier of the growing fatty acid chain in fatty acid biosynthesis. Is involved in the transfer of long hydroxylated fatty acids to lipid A. The chain is Acyl carrier protein AcpXL (acpXL) from Rhizobium meliloti (strain 1021) (Ensifer meliloti).